Consider the following 201-residue polypeptide: UPF0323 lipoprotein Cj0371 (201 aa).

A signal peptide spans 1-26 (MKKIKKIIQIGMIGGLAAVAGGALAG). Residue Cys27 is the site of N-palmitoyl cysteine attachment. A lipid anchor (S-diacylglycerol cysteine) is attached at Cys27. The tract at residues 169–201 (NKAGTTSSASSAKKSGFFGGGSKATSSSSSFGS) is disordered. 2 stretches are compositionally biased toward low complexity: residues 170–184 (KAGT…KKSG) and 191–201 (KATSSSSSFGS).

The protein belongs to the UPF0323 family.

It is found in the cell membrane. The sequence is that of UPF0323 lipoprotein Cj0371 from Campylobacter jejuni subsp. jejuni serotype O:2 (strain ATCC 700819 / NCTC 11168).